Consider the following 449-residue polypeptide: Chromosomal replication initiator protein DnaA (449 aa).

The domain I, interacts with DnaA modulators stretch occupies residues 1–73; it reads MTQNPQWLWQ…TETIAELLQQ (73 aa). The tract at residues 73-109 is domain II; that stretch reads QPVKVRLTSPEGNTLAATQSFYSSRSGQSTRPGKKTP. Positions 90–103 are enriched in polar residues; that stretch reads TQSFYSSRSGQSTR. Positions 90-110 are disordered; sequence TQSFYSSRSGQSTRPGKKTPE. Residues 110–326 are domain III, AAA+ region; that stretch reads ELNSKYTFSR…GALLRAVTHI (217 aa). ATP-binding residues include Gly-154, Gly-156, Lys-157, and Thr-158. Residues 327 to 449 form a domain IV, binds dsDNA region; sequence AISGLPMTVE…DRINHHHQNL (123 aa).

The protein belongs to the DnaA family. As to quaternary structure, oligomerizes as a right-handed, spiral filament on DNA at oriC.

Its subcellular location is the cytoplasm. Its function is as follows. Plays an essential role in the initiation and regulation of chromosomal replication. ATP-DnaA binds to the origin of replication (oriC) to initiate formation of the DNA replication initiation complex once per cell cycle. Binds the DnaA box (a 9 base pair repeat at the origin) and separates the double-stranded (ds)DNA. Forms a right-handed helical filament on oriC DNA; dsDNA binds to the exterior of the filament while single-stranded (ss)DNA is stabiized in the filament's interior. The ATP-DnaA-oriC complex binds and stabilizes one strand of the AT-rich DNA unwinding element (DUE), permitting loading of DNA polymerase. After initiation quickly degrades to an ADP-DnaA complex that is not apt for DNA replication. Binds acidic phospholipids. The sequence is that of Chromosomal replication initiator protein DnaA from Picosynechococcus sp. (strain ATCC 27264 / PCC 7002 / PR-6) (Agmenellum quadruplicatum).